The following is a 276-amino-acid chain: Ice-binding protein (276 aa).

A signal peptide spans 1 to 24 (MKILKRIPVLAVLLVGLMTNCSND). Positions 79–82 (TGIT) match the Ice-binding site motif (T-A/G-X-T/N) 1 motif. Cys107 and Cys124 form a disulfide bridge. Short sequence motifs (ice-binding site motif (T-A/G-X-T/N)) lie at residues 245–248 (TGIN) and 263–266 (TAVT).

This sequence belongs to the ice-binding protein family. In terms of assembly, monomer.

Its subcellular location is the secreted. In terms of biological role, has antifreeze activity for survival in a subzero environment. Binds to the surface of ice crystals and inhibits their growth. Has high thermal hysteresis (TH) activity, which is the ability to lower the freezing point of an aqueous solution below its melting point, and thus the freezing of the cell fluid can be prevented protecting the organism from ice damage. The TH activity of this protein is 2.2 degrees Celsius at 5 uM and 2.5 degrees Celsius at 50 uM. This Flavobacterium frigoris (strain PS1) protein is Ice-binding protein.